We begin with the raw amino-acid sequence, 83 residues long: Small ribosomal subunit protein bS20 (83 aa).

This sequence belongs to the bacterial ribosomal protein bS20 family.

Its function is as follows. Binds directly to 16S ribosomal RNA. The chain is Small ribosomal subunit protein bS20 from Leuconostoc citreum (strain KM20).